We begin with the raw amino-acid sequence, 498 residues long: Hexokinase-1 (498 aa).

The chain crosses the membrane as a helical span at residues 4–24 (AAVGAAVVCTAAVCAAAAVLV). Residues 35–487 (GRVMAILKEL…SGIGAALLAA (453 aa)) enclose the Hexokinase domain. A hexokinase small subdomain region spans residues 90-228 (TGDEHGLFYA…GVDMRVTALV (139 aa)). Residues Gly-104, Thr-105, and Asn-106 each contribute to the ADP site. The D-glucose site is built by Thr-194, Lys-195, Asn-229, and Asp-230. Positions 229-476 (NDTVGTLAGG…ETIVIEHSND (248 aa)) are hexokinase large subdomain. Thr-253 provides a ligand contact to ADP. Positions 256, 284, and 315 each coordinate D-glucose. Gly-441 is an ADP binding site.

It belongs to the hexokinase family.

Its subcellular location is the plastid. It localises to the chloroplast outer membrane. It carries out the reaction a D-hexose + ATP = a D-hexose 6-phosphate + ADP + H(+). It catalyses the reaction D-fructose + ATP = D-fructose 6-phosphate + ADP + H(+). The catalysed reaction is D-glucose + ATP = D-glucose 6-phosphate + ADP + H(+). It participates in carbohydrate metabolism; hexose metabolism. The protein operates within carbohydrate degradation; glycolysis; D-glyceraldehyde 3-phosphate and glycerone phosphate from D-glucose: step 1/4. Its function is as follows. Fructose and glucose phosphorylating enzyme. In Spinacia oleracea (Spinach), this protein is Hexokinase-1 (HXK1).